The chain runs to 221 residues: Orotidine 5'-phosphate decarboxylase (221 aa).

Residues Asp12, Lys34, 60–69 (DFKVADIPNT), Ser117, 170–180 (PGVGAQGGKAS), Gly193, and Arg194 contribute to the substrate site. Catalysis depends on Lys62, which acts as the Proton donor.

This sequence belongs to the OMP decarboxylase family. Type 1 subfamily. Homodimer.

It catalyses the reaction orotidine 5'-phosphate + H(+) = UMP + CO2. It functions in the pathway pyrimidine metabolism; UMP biosynthesis via de novo pathway; UMP from orotate: step 2/2. Functionally, catalyzes the decarboxylation of orotidine 5'-monophosphate (OMP) to uridine 5'-monophosphate (UMP). The polypeptide is Orotidine 5'-phosphate decarboxylase (Methanosarcina acetivorans (strain ATCC 35395 / DSM 2834 / JCM 12185 / C2A)).